We begin with the raw amino-acid sequence, 171 residues long: Protein-export protein SecB (171 aa).

The protein belongs to the SecB family. As to quaternary structure, homotetramer, a dimer of dimers. One homotetramer interacts with 1 SecA dimer.

The protein localises to the cytoplasm. One of the proteins required for the normal export of preproteins out of the cell cytoplasm. It is a molecular chaperone that binds to a subset of precursor proteins, maintaining them in a translocation-competent state. It also specifically binds to its receptor SecA. The polypeptide is Protein-export protein SecB (Jannaschia sp. (strain CCS1)).